The primary structure comprises 486 residues: MSVVTRFAPSPTGMLHIGGARTALFNYLFARRNGGRFLLRIEDTDRERSTQEATDAILDAMEWLGLTPDEPPVMQSAQVDRHAAVAHDMVARGTAFRCYVTPEELQARRDLGEEKRQAAKQEGISDAEKEALLAEASQLLAPFRSPYRDGASPPSPDAPFTVRLRAPESGPRTVEDGVQGTVTIDASEIDDLVMLRADGTPTYMLAVVVDDHDMGITHVIRGDDHLRNTFRQVPIYEAMGWSVPNFSHVPMIHGNDGAKLSKRHGALSTTAYRDMGYLPEAMKAYLLRLGWSHGDQEIFTDEEAVQVFDVSGINKAPARLDLDKLATVNAHFMRLAADERLFDLICPVLSKNCSLSDAEVARIRAALPHMKDRGSTLIELANAFAFLYAKRPLELNKNAVKALSDEGKLRLKGLYDDLQRMSQWSGASISETIKSYCAATGLSMGQIGPPLRAALTGGLPAPDLAPVMDWLGREETLARIDDQLAG.

Residues 9–19 (PSPTGMLHIGG) carry the 'HIGH' region motif. Residues 259–263 (KLSKR) carry the 'KMSKS' region motif. Lys262 contacts ATP.

This sequence belongs to the class-I aminoacyl-tRNA synthetase family. Glutamate--tRNA ligase type 1 subfamily. Monomer.

It is found in the cytoplasm. The enzyme catalyses tRNA(Glu) + L-glutamate + ATP = L-glutamyl-tRNA(Glu) + AMP + diphosphate. Its function is as follows. Catalyzes the attachment of glutamate to tRNA(Glu) in a two-step reaction: glutamate is first activated by ATP to form Glu-AMP and then transferred to the acceptor end of tRNA(Glu). The protein is Glutamate--tRNA ligase 1 of Hyphomonas neptunium (strain ATCC 15444).